The primary structure comprises 2559 residues: Ubiquitin carboxyl-terminal hydrolase 9X (2559 aa).

Polar residues predominate over residues 1–44; the sequence is MTATTRGSPVGGNDNQGQAPDGQSQPPLQQNQTSSPDSSNENSP. A disordered region spans residues 1–64; it reads MTATTRGSPV…DAPPQIEDEE (64 aa). Phosphoserine is present on residues serine 374, serine 375, and serine 588. A disordered region spans residues 967–999; the sequence is QISSNMPSSPDSSSDSSTGSPGNHGNHYSDGPN. Residues 969–989 show a composition bias toward low complexity; it reads SSNMPSSPDSSSDSSTGSPGN. Residues 1557–1956 enclose the USP domain; sequence VGLKNAGATC…NAYILFYERM (400 aa). Cysteine 1566 functions as the Nucleophile in the catalytic mechanism. The segment at 1592–1633 is disordered; it reads GSDVDDDMSGDEKQDNESNVDPRDDVFGYPQQFEDKPPLSKT. Serine 1600 is modified (phosphoserine). Basic and acidic residues-rich tracts occupy residues 1601–1617 and 1624–1633; these read GDEKQDNESNVDPRDDV and FEDKPPLSKT. 4 residues coordinate Zn(2+): cysteine 1727, histidine 1729, cysteine 1771, and cysteine 1774. Catalysis depends on histidine 1879, which acts as the Proton acceptor. Serine 2443 carries the phosphoserine modification. Residues 2475 to 2484 are compositionally biased toward acidic residues; the sequence is PEEEPDDQDA. Residues 2475-2559 are disordered; sequence PEEEPDDQDA…QTKGSVKCTY (85 aa). Polar residues-rich tracts occupy residues 2503–2513 and 2527–2537; these read PGSQYQQNNHV and NNPQRTGQRAQ. Tyrosine 2540 is subject to Phosphotyrosine. A Phosphoserine modification is found at serine 2547. Threonine 2551 carries the post-translational modification Phosphothreonine.

The protein belongs to the peptidase C19 family. Interacts with SMAD4, MARK4, NUAK1 and BIRC5/survivin. Interacts with DCX. Interacts with OTUD4 and USP7; the interaction is direct. Highest levels in liver and brain with expression also detected in heart, muscle, spleen and kidney (at protein leve). Ubiquitously expressed in adult tissues.

It is found in the cytoplasm. Its subcellular location is the cytosol. The protein resides in the cell projection. It localises to the growth cone. The protein localises to the cytoskeleton. It is found in the cilium axoneme. It catalyses the reaction Thiol-dependent hydrolysis of ester, thioester, amide, peptide and isopeptide bonds formed by the C-terminal Gly of ubiquitin (a 76-residue protein attached to proteins as an intracellular targeting signal).. Functionally, deubiquitinase involved both in the processing of ubiquitin precursors and of ubiquitinated proteins. May therefore play an important regulatory role at the level of protein turnover by preventing degradation of proteins through the removal of conjugated ubiquitin. Specifically hydrolyzes 'Lys-11'-, followed by 'Lys-63'-, 'Lys-48'- and 'Lys-6'-linked polyubiquitins chains. Essential component of TGF-beta/BMP signaling cascade. Specifically deubiquitinates monoubiquitinated SMAD4, opposing the activity of E3 ubiquitin-protein ligase TRIM33. Deubiquitinates alkylation repair enzyme ALKBH3. OTUD4 recruits USP7 and USP9X to stabilize ALKBH3, thereby promoting the repair of alkylated DNA lesions. Deubiquitinates RNA demethylase enzyme ALKBH5, promoting its stability. Deubiquitinates mTORC2 complex component RICTOR at 'Lys-294' by removing 'Lys-63'-linked polyubiquitin chains, stabilizing RICTOR and enhancing its binding to MTOR, thus promoting mTORC2 complex assembly. Regulates chromosome alignment and segregation in mitosis by regulating the localization of BIRC5/survivin to mitotic centromeres. Involved in axonal growth and neuronal cell migration. Regulates cellular clock function by enhancing the protein stability and transcriptional activity of the core circadian protein BMAL1 via its deubiquitinating activity. Acts as a regulator of peroxisome import by mediating deubiquitination of PEX5: specifically deubiquitinates PEX5 monoubiquitinated at 'Cys-11' following its retrotranslocation into the cytosol, resetting PEX5 for a subsequent import cycle. Deubiquitinates PEG10. Inhibits the activation of the Hippo signaling pathway via deubiquitination of AMOTL2 at 'Lys-337' and 'Lys-404' which prohibits its interaction with and activation of LATS2. Loss of LATS2 activation and subsequent loss of YAP1 phosphorylation results in an increase in YAP1-driven transcription of target genes. This Mus musculus (Mouse) protein is Ubiquitin carboxyl-terminal hydrolase 9X.